Here is a 294-residue protein sequence, read N- to C-terminus: Acetylglutamate kinase (294 aa).

Substrate-binding positions include 66-67 (GG), R88, and N193.

The protein belongs to the acetylglutamate kinase family. ArgB subfamily.

The protein resides in the cytoplasm. The enzyme catalyses N-acetyl-L-glutamate + ATP = N-acetyl-L-glutamyl 5-phosphate + ADP. Its pathway is amino-acid biosynthesis; L-arginine biosynthesis; N(2)-acetyl-L-ornithine from L-glutamate: step 2/4. In terms of biological role, catalyzes the ATP-dependent phosphorylation of N-acetyl-L-glutamate. The protein is Acetylglutamate kinase of Agrobacterium fabrum (strain C58 / ATCC 33970) (Agrobacterium tumefaciens (strain C58)).